The chain runs to 482 residues: Docking protein 1 (482 aa).

Position 1 is an N-acetylmethionine (M1). The region spanning 4–119 (AVMEGPLFLQ…WVQTLCRTAF (116 aa)) is the PH domain. A Phosphoserine modification is found at S48. The IRS-type PTB domain occupies 151–259 (EGSQFWVTSQ…QQQKAQGKVG (109 aa)). S269 and S290 each carry phosphoserine. The disordered stretch occupies residues 269–328 (SHDGETEGKTVPPPVPQDPLGSPPALYAEPLDSLRIPPGPSQDSVYSDPLGSTPAGAGEG). Residues Y295, Y336, Y340, Y361, and Y376 each carry the phosphotyrosine modification. The tract at residues 353 to 373 (TDSKEDPIYDEPEGLAPAPPR) is disordered. Y397 is modified (phosphotyrosine; by INSR). The tract at residues 398-482 (ELPYNPATDD…RAGVKSEGST (85 aa)) is disordered. Y408 carries the post-translational modification Phosphotyrosine. Positions 410-423 (VPPPRSPKPAPAPK) are enriched in pro residues. S415 carries the phosphoserine modification. Over residues 432–459 (SGTTRGSGSKGFSSDTALYSQVQKSGTS) the composition is skewed to polar residues. Phosphotyrosine is present on Y450.

Belongs to the DOK family. Type A subfamily. As to quaternary structure, interacts with RasGAP, INPP5D/SHIP1 and ABL1. Interacts directly with phosphorylated ITGB3. Interacts with SRMS (via the SH2 and SH3 domains). Constitutively tyrosine-phosphorylated. Phosphorylated by TEC. Phosphorylated on tyrosine residues by the insulin receptor kinase. Results in the negative regulation of the insulin signaling pathway. Phosphorylated by LYN. Phosphorylated on tyrosine residues by SRMS. In terms of tissue distribution, expressed in lung, spleen, skeletal muscle and kidney.

It is found in the cytoplasm. The protein resides in the nucleus. DOK proteins are enzymatically inert adaptor or scaffolding proteins. They provide a docking platform for the assembly of multimolecular signaling complexes. DOK1 appears to be a negative regulator of the insulin signaling pathway. Modulates integrin activation by competing with talin for the same binding site on ITGB3. This Mus musculus (Mouse) protein is Docking protein 1 (Dok1).